The following is a 342-amino-acid chain: Phosphate acyltransferase (342 aa).

Belongs to the PlsX family. As to quaternary structure, homodimer. Probably interacts with PlsY.

It is found in the cytoplasm. The catalysed reaction is a fatty acyl-[ACP] + phosphate = an acyl phosphate + holo-[ACP]. The protein operates within lipid metabolism; phospholipid metabolism. Its function is as follows. Catalyzes the reversible formation of acyl-phosphate (acyl-PO(4)) from acyl-[acyl-carrier-protein] (acyl-ACP). This enzyme utilizes acyl-ACP as fatty acyl donor, but not acyl-CoA. The sequence is that of Phosphate acyltransferase from Shewanella sediminis (strain HAW-EB3).